The primary structure comprises 437 residues: GTPase Obg (437 aa).

One can recognise an Obg domain in the interval 2–160 (SMFLDTAKIS…RQLELELKIL (159 aa)). The region spanning 161-338 (ADVGLVGFPS…LLEATAELLA (178 aa)) is the OBG-type G domain. Residues 167-174 (GFPSVGKS), 192-196 (FTTIV), 214-217 (DLPG), 284-287 (NKMD), and 319-321 (SSL) each bind GTP. Mg(2+) is bound by residues Ser174 and Thr194. Positions 359 to 437 (GFAEAEKEFE…IGKFEFEFVD (79 aa)) constitute an OCT domain.

This sequence belongs to the TRAFAC class OBG-HflX-like GTPase superfamily. OBG GTPase family. As to quaternary structure, monomer. It depends on Mg(2+) as a cofactor.

The protein resides in the cytoplasm. An essential GTPase which binds GTP, GDP and possibly (p)ppGpp with moderate affinity, with high nucleotide exchange rates and a fairly low GTP hydrolysis rate. Plays a role in control of the cell cycle, stress response, ribosome biogenesis and in those bacteria that undergo differentiation, in morphogenesis control. The protein is GTPase Obg of Streptococcus pyogenes serotype M28 (strain MGAS6180).